Here is a 374-residue protein sequence, read N- to C-terminus: Queuine tRNA-ribosyltransferase (374 aa).

The Proton acceptor role is filled by Asp89. Substrate is bound by residues 89–93 (DSGGF), Asp143, Gln187, and Gly214. An RNA binding region spans residues 245–251 (GVGKPED). The active-site Nucleophile is Asp264. The interval 269-273 (TRNAR) is RNA binding; important for wobble base 34 recognition. 4 residues coordinate Zn(2+): Cys302, Cys304, Cys307, and His333.

Belongs to the queuine tRNA-ribosyltransferase family. As to quaternary structure, homodimer. Within each dimer, one monomer is responsible for RNA recognition and catalysis, while the other monomer binds to the replacement base PreQ1. The cofactor is Zn(2+).

The catalysed reaction is 7-aminomethyl-7-carbaguanine + guanosine(34) in tRNA = 7-aminomethyl-7-carbaguanosine(34) in tRNA + guanine. The protein operates within tRNA modification; tRNA-queuosine biosynthesis. Functionally, catalyzes the base-exchange of a guanine (G) residue with the queuine precursor 7-aminomethyl-7-deazaguanine (PreQ1) at position 34 (anticodon wobble position) in tRNAs with GU(N) anticodons (tRNA-Asp, -Asn, -His and -Tyr). Catalysis occurs through a double-displacement mechanism. The nucleophile active site attacks the C1' of nucleotide 34 to detach the guanine base from the RNA, forming a covalent enzyme-RNA intermediate. The proton acceptor active site deprotonates the incoming PreQ1, allowing a nucleophilic attack on the C1' of the ribose to form the product. After dissociation, two additional enzymatic reactions on the tRNA convert PreQ1 to queuine (Q), resulting in the hypermodified nucleoside queuosine (7-(((4,5-cis-dihydroxy-2-cyclopenten-1-yl)amino)methyl)-7-deazaguanosine). In Psychromonas ingrahamii (strain DSM 17664 / CCUG 51855 / 37), this protein is Queuine tRNA-ribosyltransferase.